Consider the following 111-residue polypeptide: Mitochondrial import inner membrane translocase subunit Tim10B (111 aa).

The short motif at 24–48 (CFNACARDYTTSTLTKDEGSCVSQC) is the Twin CX3C motif element. Cystine bridges form between C24–C48 and C28–C44. Residues 73-111 (KQGEQSPTEAIKSAKPEPAVPAPEATPVETTPVIEENKQ) are disordered. Residues 94–105 (APEATPVETTPV) show a composition bias toward low complexity.

It belongs to the small Tim family. In terms of assembly, component of the TIM22 complex, whose core is composed of tim-22, associated with peripheral protein tin-9.2/tim-10b and the 70 kDa heterohexamer. In most cases, the 70 kDa complex is composed of TIMM9 and TIMM10.

It is found in the mitochondrion inner membrane. Functionally, component of the TIM22 complex, a complex that mediates the import and insertion of multi-pass transmembrane proteins into the mitochondrial inner membrane. The TIM22 complex forms a twin-pore translocase that uses the membrane potential as the external driving force. In the TIM22 complex, it may act as a docking point for the soluble 70 kDa complex that guides the target proteins in transit through the aqueous mitochondrial intermembrane space. The protein is Mitochondrial import inner membrane translocase subunit Tim10B (tin-9.2) of Caenorhabditis elegans.